The chain runs to 206 residues: Ras-related protein Ral-A (206 aa).

Position 21–28 (21–28 (GSGGVGKS)) interacts with GTP. An Effector region motif is present at residues 43–51 (YEPTKADSY). Residues 68 to 72 (DTAGQ) and 127 to 130 (NKSD) each bind GTP. Ser194 bears the Phosphoserine mark. Cys203 is subject to Cysteine methyl ester. Cys203 carries S-geranylgeranyl cysteine lipidation. Residues 204–206 (CIL) constitute a propeptide, removed in mature form.

Belongs to the small GTPase superfamily. Ras family. As to quaternary structure, interacts (via effector domain) with RALBP1; during mitosis, recruits RALBP1 to the mitochondrion where it promotes DNM1L phosphorylation and mitochondrial fission. Interacts with EXOC2/Sec5 and EXOC8/Exo84; binding to EXOC2 and EXOC8 is mutually exclusive. Interacts with Clostridium exoenzyme C3. Interacts with RALGPS1. Interacts with LPAR1 and LPAR2. Interacts with GRK2 in response to LPAR1 activation. RALA and GRK2 binding to LPAR1 is mutually exclusive. Interacts with CDC42. Prenylation is essential for membrane localization. Post-translationally, phosphorylated. Phosphorylation at Ser-194 by AURKA/Aurora kinase A, during mitosis, induces RALA localization to the mitochondrion where it regulates mitochondrial fission.

It is found in the cell membrane. The protein resides in the cleavage furrow. Its subcellular location is the midbody. The protein localises to the midbody ring. It localises to the mitochondrion. The enzyme catalyses GTP + H2O = GDP + phosphate + H(+). Alternates between an inactive form bound to GDP and an active form bound to GTP. Activated by a guanine nucleotide-exchange factor (GEF) and inactivated by a GTPase-activating protein (GAP). Multifunctional GTPase involved in a variety of cellular processes including gene expression, cell migration, cell proliferation, oncogenic transformation and membrane trafficking. Accomplishes its multiple functions by interacting with distinct downstream effectors. Acts as a GTP sensor for GTP-dependent exocytosis of dense core vesicles. Key regulator of LPAR1 signaling and competes with GRK2 for binding to LPAR1 thus affecting the signaling properties of the receptor. Required for anchorage-independent proliferation of transformed cells. The RALA-exocyst complex regulates integrin-dependent membrane raft exocytosis and growth signaling. During mitosis, supports the stabilization and elongation of the intracellular bridge between dividing cells. Cooperates with EXOC2 to recruit other components of the exocyst to the early midbody. During mitosis, also controls mitochondrial fission by recruiting to the mitochondrion RALBP1, which mediates the phosphorylation and activation of DNM1L by the mitotic kinase cyclin B-CDK1. The sequence is that of Ras-related protein Ral-A (Rala) from Mus musculus (Mouse).